Here is a 1586-residue protein sequence, read N- to C-terminus: Pentafunctional AROM polypeptide (1586 aa).

The segment at 1 to 384 (MSEPTKISIL…HEPKASVVSN (384 aa)) is 3-dehydroquinate synthase. Residues 44–46 (DTN), 81–84 (ESSK), 114–116 (GGV), and aspartate 119 each bind NAD(+). Residue arginine 130 participates in 7-phospho-2-dehydro-3-deoxy-D-arabino-heptonate binding. 139–140 (TT) provides a ligand contact to NAD(+). 7-phospho-2-dehydro-3-deoxy-D-arabino-heptonate-binding residues include aspartate 146 and lysine 152. Position 161 (lysine 161) interacts with NAD(+). A 7-phospho-2-dehydro-3-deoxy-D-arabino-heptonate-binding site is contributed by asparagine 162. Residues 179–182 (FLET) and asparagine 190 each bind NAD(+). Glutamate 194 contributes to the Zn(2+) binding site. Residues 194–197 (EVIK) and lysine 250 contribute to the 7-phospho-2-dehydro-3-deoxy-D-arabino-heptonate site. Glutamate 260 functions as the Proton acceptor; for 3-dehydroquinate synthase activity in the catalytic mechanism. 7-phospho-2-dehydro-3-deoxy-D-arabino-heptonate contacts are provided by residues 264–268 (RNLLN) and histidine 271. Histidine 271 contacts Zn(2+). Histidine 275 serves as the catalytic Proton acceptor; for 3-dehydroquinate synthase activity. Residues histidine 287 and lysine 356 each contribute to the 7-phospho-2-dehydro-3-deoxy-D-arabino-heptonate site. Zn(2+) is bound at residue histidine 287. The interval 397–842 (VHPGVPKSLN…WDALKQMFSV (446 aa)) is EPSP synthase. Catalysis depends on cysteine 824, which acts as the For EPSP synthase activity. Residues 864 to 1056 (SASVFIIGMR…KKKKHSFFVS (193 aa)) are shikimate kinase. 871 to 878 (GMRGAGKT) lines the ATP pocket. A 3-dehydroquinase region spans residues 1057–1277 (LTLPDVEPSG…AAPGQLSAAE (221 aa)). Histidine 1180 functions as the Proton acceptor; for 3-dehydroquinate dehydratase activity in the catalytic mechanism. The active-site Schiff-base intermediate with substrate; for 3-dehydroquinate dehydratase activity is the lysine 1208. The tract at residues 1290-1586 (AQKFAIFGSP…SKHLDYFLSF (297 aa)) is shikimate dehydrogenase.

This sequence in the N-terminal section; belongs to the sugar phosphate cyclases superfamily. Dehydroquinate synthase family. The protein in the 2nd section; belongs to the EPSP synthase family. In the 3rd section; belongs to the shikimate kinase family. It in the 4th section; belongs to the type-I 3-dehydroquinase family. This sequence in the C-terminal section; belongs to the shikimate dehydrogenase family. As to quaternary structure, homodimer. Zn(2+) serves as cofactor.

The protein localises to the cytoplasm. It carries out the reaction 7-phospho-2-dehydro-3-deoxy-D-arabino-heptonate = 3-dehydroquinate + phosphate. The enzyme catalyses 3-dehydroquinate = 3-dehydroshikimate + H2O. The catalysed reaction is shikimate + NADP(+) = 3-dehydroshikimate + NADPH + H(+). It catalyses the reaction shikimate + ATP = 3-phosphoshikimate + ADP + H(+). It carries out the reaction 3-phosphoshikimate + phosphoenolpyruvate = 5-O-(1-carboxyvinyl)-3-phosphoshikimate + phosphate. It participates in metabolic intermediate biosynthesis; chorismate biosynthesis; chorismate from D-erythrose 4-phosphate and phosphoenolpyruvate: step 2/7. Its pathway is metabolic intermediate biosynthesis; chorismate biosynthesis; chorismate from D-erythrose 4-phosphate and phosphoenolpyruvate: step 3/7. The protein operates within metabolic intermediate biosynthesis; chorismate biosynthesis; chorismate from D-erythrose 4-phosphate and phosphoenolpyruvate: step 4/7. It functions in the pathway metabolic intermediate biosynthesis; chorismate biosynthesis; chorismate from D-erythrose 4-phosphate and phosphoenolpyruvate: step 5/7. It participates in metabolic intermediate biosynthesis; chorismate biosynthesis; chorismate from D-erythrose 4-phosphate and phosphoenolpyruvate: step 6/7. Functionally, the AROM polypeptide catalyzes 5 consecutive enzymatic reactions in prechorismate polyaromatic amino acid biosynthesis. The protein is Pentafunctional AROM polypeptide of Penicillium rubens (strain ATCC 28089 / DSM 1075 / NRRL 1951 / Wisconsin 54-1255) (Penicillium chrysogenum).